The chain runs to 650 residues: AP-1-like transcription factor YAP1 (650 aa).

A disordered region spans residues 1–89 (MSVSTAKRSL…AFRERKERKM (89 aa)). Residues serine 9, serine 14, and serine 17 each carry the phosphoserine modification. Composition is skewed to basic and acidic residues over residues 22–50 (EGSKSRHDEIENEHRRTGTRDGEDSEQPK), 58–68 (KKQDLDPETKQ), and 80–89 (AFRERKERKM). 2 short sequence motifs (bipartite nuclear localization signal) span residues 35-42 (HRRTGTRD) and 68-75 (QKRTAQNR). Residues 64–127 (PETKQKRTAQ…ITLVNELKKY (64 aa)) enclose the bZIP domain. Residues 67–90 (KQKRTAQNRAAQRAFRERKERKMK) are basic motif. The segment at 92–120 (LEKKVQSLESIQQQNEVEATFLRDQLITL) is leucine-zipper. Disordered stretches follow at residues 149 to 169 (HFSKNNVNHSNSEPIDTPNDD) and 183 to 251 (QYPL…PNSS). The span at 150 to 162 (FSKNNVNHSNSEP) shows a compositional bias: polar residues. Threonine 165 is subject to Phosphothreonine. Residues 195-209 (SKNVGKQLPSPNDPS) are compositionally biased toward polar residues. Serine 204 is modified (phosphoserine). The tract at residues 220–378 (QKKLSDATDS…YENSFSGFGR (159 aa)) is transcription activation 1. The span at 226–246 (ATDSSSATLDSLSNSNDVLNN) shows a compositional bias: low complexity. A n-CRD region spans residues 303-315 (CSKMNQVCGTRQC). 5 disulfide bridges follow: cysteine 303–cysteine 598, cysteine 310–cysteine 629, cysteine 598–cysteine 620, cysteine 598–cysteine 629, and cysteine 620–cysteine 629. Phosphoserine is present on serine 372. Positions 392–414 (DNSTGSTDSTGSTGNKNKKNNNN) are enriched in low complexity. Disordered stretches follow at residues 392–419 (DNSTGSTDSTGSTGNKNKKNNNNSDDVL), 510–532 (LFGEFLEDDDDDKKAANMSDDES), and 551–591 (LQSV…VPSK). The transcription activation 2 stretch occupies residues 430–537 (NQVTNFFSPG…SDDESSLIKN (108 aa)). Serine 528 carries the phosphoserine modification. Over residues 551-570 (LQSVPGNESEISQKNGSSLQ) the composition is skewed to polar residues. Low complexity predominate over residues 571–580 (NADKINNGND). The interval 598 to 629 (CSEIWDRITTHPKYSDIDVDGLCSELMAKAKC) is c-CRD. The Nuclear export signal signature appears at 614–621 (IDVDGLCS).

The protein belongs to the bZIP family. YAP subfamily. In terms of assembly, interacts independent of oxidation state in the cytoplasm with the karyopherin PSE1/KAP121 (and less strongly with KAP123). The reduced form of YAP1 interacts in the nucleus with the nuclear export protein CRM1, and in the cytoplasm with YBP1 and the peroxiredoxin HYR1/GPX3/ORP1. Interacts with RBG1. In terms of processing, depending on the oxidative stress inducing agent, YAP1 can undergo two distinct conformational changes, both involving disulfide bond formation, and both masking the nuclear export signal, thus abolishing nuclear export by CRM1/exportin 1. The disulfide stress-inducing agent diamide leads to the formation of one of three possible disulfide bonds in the c-CRD. Peroxide stress induces the formation of the HYR1/GPX3- and YBP1-dependent interdomain disulfide bond between Cys-303 and Cys-598 (causing nuclear localization of YAP1), and the possibly stabilizing bond between Cys-310 and Cys-629 (required for full activity of YAP1).

Its subcellular location is the nucleus. The protein resides in the cytoplasm. In terms of biological role, transcription activator involved in oxidative stress response and redox homeostasis. Regulates the transcription of genes encoding antioxidant enzymes and components of the cellular thiol-reducing pathways, including the thioredoxin system (TRX2, TRR1), the glutaredoxin system (GSH1, GLR1), superoxide dismutase (SOD1, SOD2), glutathione peroxidase (GPX2), and thiol-specific peroxidases (TSA1, AHP1). The induction of some of these genes requires the cooperative action of both, YAP1 and SKN7. Preferentially binds to promoters with the core binding site 5'-TTA[CG]TAA-3'. Activity of the transcription factor is controlled through oxidation of specific cysteine residues resulting in the alteration of its subcellular location. Oxidative stress (as well as carbon stress, but not increased temperature, acidic pH, or ionic stress) induces nuclear accumulation and as a result YAP1 transcriptional activity. Activation by hydrogen peroxide or thiol-reactive chemicals elicit distinct adaptive gene responses. Nuclear export is restored when disulfide bonds are reduced by thioredoxin (TRX2), whose expression is controlled by YAP1, providing a mechanism for negative autoregulation. When overexpressed, YAP1 confers pleiotropic drug-resistance and increases cellular tolerance to cadmium, iron chelators and zinc. This Saccharomyces cerevisiae (strain ATCC 204508 / S288c) (Baker's yeast) protein is AP-1-like transcription factor YAP1.